We begin with the raw amino-acid sequence, 1003 residues long: Glycine--tRNA ligase (1003 aa).

Residues 1–310 (MSSQPLTLQD…VTAKQIPHIC (310 aa)) are glycine--tRNA ligase alpha subunit. Positions 311 to 1003 (QDEDFLLEIG…CFGFYAWDAL (693 aa)) are glycine--tRNA ligase beta subunit.

Belongs to the class-II aminoacyl-tRNA synthetase family.

The protein localises to the cytoplasm. It carries out the reaction tRNA(Gly) + glycine + ATP = glycyl-tRNA(Gly) + AMP + diphosphate. This is Glycine--tRNA ligase (glyQS) from Chlamydia muridarum (strain MoPn / Nigg).